The chain runs to 82 residues: Kappa-actitoxin-Avd4j (82 aa).

The signal sequence occupies residues 1 to 19; sequence MNKALFLCLVVLCAAVVFA. The propeptide occupies 20–31; it reads AEDLQKAKHAPF. 3 disulfide bridges follow: Cys-38/Cys-73, Cys-40/Cys-66, and Cys-56/Cys-74.

Belongs to the sea anemone type 3 (BDS) potassium channel toxin family. Weakly expressed in the ectodermal tissue from the distal and proximal tentacles, body wall, and oral disk.

It is found in the secreted. The protein resides in the nematocyst. Blocks Kv3 voltage-gated potassium channels. Reduces blood pressure. This is Kappa-actitoxin-Avd4j from Anemonia viridis (Snakelocks anemone).